Here is a 495-residue protein sequence, read N- to C-terminus: Membrane-bound lytic murein transglycosylase F (495 aa).

The first 29 residues, 1 to 29 (MEIRKLSLSTIRSIITSLSVLVLVISASA), serve as a signal peptide directing secretion. The interval 30–273 (TLVRSTPPNV…VTKHFFERHI (244 aa)) is non-LT domain. The interval 274–495 (DEVTTGEAMV…TAAQGENLSL (222 aa)) is LT domain. Glu-320 is a catalytic residue.

It in the N-terminal section; belongs to the bacterial solute-binding protein 3 family. The protein in the C-terminal section; belongs to the transglycosylase Slt family.

It is found in the cell outer membrane. It carries out the reaction Exolytic cleavage of the (1-&gt;4)-beta-glycosidic linkage between N-acetylmuramic acid (MurNAc) and N-acetylglucosamine (GlcNAc) residues in peptidoglycan, from either the reducing or the non-reducing ends of the peptidoglycan chains, with concomitant formation of a 1,6-anhydrobond in the MurNAc residue.. Functionally, murein-degrading enzyme that degrades murein glycan strands and insoluble, high-molecular weight murein sacculi, with the concomitant formation of a 1,6-anhydromuramoyl product. Lytic transglycosylases (LTs) play an integral role in the metabolism of the peptidoglycan (PG) sacculus. Their lytic action creates space within the PG sacculus to allow for its expansion as well as for the insertion of various structures such as secretion systems and flagella. The protein is Membrane-bound lytic murein transglycosylase F of Cellvibrio japonicus (strain Ueda107) (Pseudomonas fluorescens subsp. cellulosa).